Reading from the N-terminus, the 257-residue chain is 14-3-3-like protein GF14-G (257 aa).

It belongs to the 14-3-3 family.

Is associated with a DNA binding complex that binds to the G box, a well-characterized cis-acting DNA regulatory element found in plant genes. This chain is 14-3-3-like protein GF14-G (GF14G), found in Oryza sativa subsp. japonica (Rice).